We begin with the raw amino-acid sequence, 714 residues long: Neutral ceramidase A (714 aa).

An N-terminal signal peptide occupies residues 1 to 23; that stretch reads MKRSIVFIYSLVILLLSVGFIDA. N218 and N246 each carry an N-linked (GlcNAc...) asparagine glycan. S293 (nucleophile) is an active-site residue. N353, N373, N416, N571, N610, and N700 each carry an N-linked (GlcNAc...) asparagine glycan.

It belongs to the neutral ceramidase family.

Its subcellular location is the secreted. It carries out the reaction an N-acylsphing-4-enine + H2O = sphing-4-enine + a fatty acid. Hydrolyzes the sphingolipid ceramide into sphingosine and free fatty acid at an optimal pH of 3.0. Has no activity toward glycosphingolipids, such as GalCer and Galbeta1-3GalNAcbeta1-4(NeuAcalpha2-3)Galbeta1-4Glcbeta1-1'Cer or sphingomyelin. The chain is Neutral ceramidase A (dcd2A) from Dictyostelium discoideum (Social amoeba).